We begin with the raw amino-acid sequence, 116 residues long: Large ribosomal subunit protein bL17 (116 aa).

This sequence belongs to the bacterial ribosomal protein bL17 family. As to quaternary structure, part of the 50S ribosomal subunit. Contacts protein L32.

The chain is Large ribosomal subunit protein bL17 from Thermosynechococcus vestitus (strain NIES-2133 / IAM M-273 / BP-1).